The chain runs to 310 residues: MKTVKILDSHTGGEPTRLVLEGFPDLGTGDIESRRKILSEQYDHFRRATMLEPRGNDVLVGALLCKPVNPKASAGVIFFNNTGYLGMCGHGTIGLVASLAHLGKIQVGTHLIETPVGDVEATLHEDHSVSVRNVPAYRYKKAVEVNVEKYGKVTGDIAWGGNWFFLINDHGQRVASDNLDQLTEYAWTVRQALTAQGITGKDGQEIDHIELFASDTEADSKNFVLCPGKAYDRSPCGTGTSAKIACLAADGKLEPGKLWKQASIIGSQFIASYEQAGEYVIPTIRGEAYMSAEATLFMDENDPFAWGIQL.

The Proton acceptor role is filled by C88. Substrate contacts are provided by residues 89–90 (GH), H208, and D232. The Proton donor role is filled by C236. 237–238 (GT) provides a ligand contact to substrate.

It belongs to the proline racemase family.

It catalyses the reaction trans-4-hydroxy-L-proline = cis-4-hydroxy-D-proline. Its function is as follows. Catalyzes the epimerization of trans-4-hydroxy-L-proline (t4LHyp) to cis-4-hydroxy-D-proline (c4DHyp). Is likely involved in a degradation pathway that converts t4LHyp to alpha-ketoglutarate. Displays no proline racemase activity. The protein is 4-hydroxyproline 2-epimerase of Acinetobacter baumannii (strain AYE).